The following is a 403-amino-acid chain: UPF0229 protein CKR_0568 (403 aa).

Positions 71 to 109 are disordered; sequence SSGVGSGDGSQKKGDRIGKAIKDRDGKGNQGAGNQEGED. Basic and acidic residues predominate over residues 80-97; that stretch reads SQKKGDRIGKAIKDRDGK.

The protein belongs to the UPF0229 family.

The polypeptide is UPF0229 protein CKR_0568 (Clostridium kluyveri (strain NBRC 12016)).